The primary structure comprises 242 residues: Carboxy-S-adenosyl-L-methionine synthase (242 aa).

Residues Tyr38, 63 to 65, 88 to 89, 116 to 117, and Arg199 each bind S-adenosyl-L-methionine; these read GCS, DN, and DL.

This sequence belongs to the class I-like SAM-binding methyltransferase superfamily. Cx-SAM synthase family. As to quaternary structure, homodimer.

It catalyses the reaction prephenate + S-adenosyl-L-methionine = carboxy-S-adenosyl-L-methionine + 3-phenylpyruvate + H2O. In terms of biological role, catalyzes the conversion of S-adenosyl-L-methionine (SAM) to carboxy-S-adenosyl-L-methionine (Cx-SAM). The sequence is that of Carboxy-S-adenosyl-L-methionine synthase from Methylococcus capsulatus (strain ATCC 33009 / NCIMB 11132 / Bath).